Reading from the N-terminus, the 434-residue chain is Nicotinate phosphoribosyltransferase (434 aa).

H242 bears the Phosphohistidine; by autocatalysis mark.

It belongs to the NAPRTase family. Transiently phosphorylated on a His residue during the reaction cycle. Phosphorylation strongly increases the affinity for substrates and increases the rate of nicotinate D-ribonucleotide production. Dephosphorylation regenerates the low-affinity form of the enzyme, leading to product release.

It catalyses the reaction nicotinate + 5-phospho-alpha-D-ribose 1-diphosphate + ATP + H2O = nicotinate beta-D-ribonucleotide + ADP + phosphate + diphosphate. It functions in the pathway cofactor biosynthesis; NAD(+) biosynthesis; nicotinate D-ribonucleotide from nicotinate: step 1/1. Its function is as follows. Catalyzes the synthesis of beta-nicotinate D-ribonucleotide from nicotinate and 5-phospho-D-ribose 1-phosphate at the expense of ATP. In Bartonella quintana (strain Toulouse) (Rochalimaea quintana), this protein is Nicotinate phosphoribosyltransferase.